A 315-amino-acid chain; its full sequence is Methionyl-tRNA formyltransferase (315 aa).

112–115 provides a ligand contact to (6S)-5,6,7,8-tetrahydrofolate; that stretch reads SLLP.

It belongs to the Fmt family.

The enzyme catalyses L-methionyl-tRNA(fMet) + (6R)-10-formyltetrahydrofolate = N-formyl-L-methionyl-tRNA(fMet) + (6S)-5,6,7,8-tetrahydrofolate + H(+). In terms of biological role, attaches a formyl group to the free amino group of methionyl-tRNA(fMet). The formyl group appears to play a dual role in the initiator identity of N-formylmethionyl-tRNA by promoting its recognition by IF2 and preventing the misappropriation of this tRNA by the elongation apparatus. The sequence is that of Methionyl-tRNA formyltransferase from Rhizobium rhizogenes (strain K84 / ATCC BAA-868) (Agrobacterium radiobacter).